Here is a 598-residue protein sequence, read N- to C-terminus: MFS siderochrome iron transporter D (598 aa).

The segment at 1–34 is disordered; that stretch reads MLSSWQKKFFQTPEHPPAEGIAPPRDDGVPNPEP. At 1–76 the chain is on the cytoplasmic side; sequence MLSSWQKKFF…AEAITLTWSK (76 aa). A helical membrane pass occupies residues 77–97; that stretch reads ISLGAAYFLMWLLYLVNGFQA. Over 98-115 the chain is Extracellular; that stretch reads SITGNLSAYVTSGFESHS. Asn102 is a glycosylation site (N-linked (GlcNAc...) asparagine). A helical membrane pass occupies residues 116 to 136; that stretch reads LIPVISIVSSVMSAATYMPLA. At 137–144 the chain is on the cytoplasmic side; sequence KVLNLWDR. Residues 145 to 165 form a helical membrane-spanning segment; sequence SIGFIIMVAFATLGLILSATC. Residues 166 to 171 lie on the Extracellular side of the membrane; that stretch reads HDIGTY. Residues 172 to 192 form a helical membrane-spanning segment; the sequence is CAAQVFYSIGFAGIIFSVDVI. At 193–203 the chain is on the cytoplasmic side; that stretch reads TADTSTLRDRG. The helical transmembrane segment at 204-224 threads the bilayer; it reads LAYAFTSSPYIITAFGGPAAA. Residues 225–233 are Extracellular-facing; sequence EHFYDSNWR. A helical membrane pass occupies residues 234-254; the sequence is WAYGCFSIVLPVVALPMFCLL. Residues 255–289 lie on the Cytoplasmic side of the membrane; sequence RWNRHKAKKSGLLKDKADSGRTWMESIRHYIIEFD. The helical transmembrane segment at 290 to 310 threads the bilayer; sequence ILGVFFLAAGLVLFLLPFSIA. Over 311–318 the chain is Extracellular; sequence GSTEDDWK. A helical membrane pass occupies residues 319 to 339; that stretch reads SASIITMLVIGFVCLLVFALV. The Cytoplasmic segment spans residues 340-341; that stretch reads ER. A helical transmembrane segment spans residues 342–362; the sequence is FVAPVPFLPWALLASRTVLGA. Residues 363–396 are Extracellular-facing; the sequence is CMLDVCYQIAYYCWFNYYTSYLQVVYGTSITTAG. A helical transmembrane segment spans residues 397 to 417; sequence YITSIFDVVSGVWLFIVGFLI. The Cytoplasmic segment spans residues 418-424; it reads KKTNRFR. A helical transmembrane segment spans residues 425–445; the sequence is WLLFIAVPLYILGVGLMIYFR. At 446–450 the chain is on the extracellular side; sequence KPSWS. Residues 451–471 form a helical membrane-spanning segment; that stretch reads VGYMIMCQIFIAFAGGTMIIC. Residues 472-490 are Cytoplasmic-facing; the sequence is QQVAVLAASDHDHAASSLA. Residues 491–511 traverse the membrane as a helical segment; that stretch reads FLNVFGTMGSAVGSSISGAIW. The Extracellular segment spans residues 512–562; it reads THTLPGALQRLLPDSVKADWQTIYDSLEEQLSYERGTLIRQAIALAYASTQ. The helical transmembrane segment at 563 to 583 threads the bilayer; the sequence is SKMLIAGTAIMALSLVWMFVI. At 584–598 the chain is on the cytoplasmic side; it reads RDIKLTKTQTKGVLF.

Belongs to the major facilitator superfamily.

It is found in the cell membrane. Its function is as follows. Major facilitator transporter involved in fusarinine C (FsC) uptake. In contrast to TAFC-mediated iron uptake, FsC-mediated iron uptake via mirD does not play a significant role during infection. In Aspergillus fumigatus (strain ATCC MYA-4609 / CBS 101355 / FGSC A1100 / Af293) (Neosartorya fumigata), this protein is MFS siderochrome iron transporter D.